The following is a 1155-amino-acid chain: Pesticidal crystal protein Cry1Ab (1155 aa).

Belongs to the delta endotoxin family.

Functionally, promotes colloidosmotic lysis by binding to the midgut epithelial cells of many lepidopteran larvae. The chain is Pesticidal crystal protein Cry1Ab (cry1Ab) from Bacillus thuringiensis subsp. aizawai.